We begin with the raw amino-acid sequence, 98 residues long: Integration host factor subunit alpha (98 aa).

The tract at residues 49–71 is disordered; that stretch reads FGNFDLRDKNQRPGRNPKTGEDI.

The protein belongs to the bacterial histone-like protein family. Heterodimer of an alpha and a beta chain.

This protein is one of the two subunits of integration host factor, a specific DNA-binding protein that functions in genetic recombination as well as in transcriptional and translational control. This is Integration host factor subunit alpha from Edwardsiella ictaluri (strain 93-146).